The sequence spans 296 residues: MNKEQLEKMTHGKGFIAALDQSGGSTPKALKEYGVNEDQYSNEDEMFQLVHDMRTRVVTSPSFSPDKILGAILFEQTMDREVEGKYTGDYLADKGVVPFLKVDKGLAEEKNGVQLMKPIDDLDETLDRANERHIFGTKMRSNILELNEQGIKDVVEQQFEFAKKIIAKGLVPIIEPEVNINAKDKSEIEKVLKAEIKKGLDSLNDDQLVMLKLTIPTEANLYKDLADHPNVVRVVVLSGGYSRDEANKLLKDNDELIASFSRALASDLRASQSQEEFDKALGDAVDSIYDASVNKN.

Glu-175 (proton acceptor) is an active-site residue. Residue Lys-212 is the Schiff-base intermediate with dihydroxyacetone-P of the active site.

It belongs to the class I fructose-bisphosphate aldolase family.

It carries out the reaction beta-D-fructose 1,6-bisphosphate = D-glyceraldehyde 3-phosphate + dihydroxyacetone phosphate. The protein operates within carbohydrate degradation; glycolysis; D-glyceraldehyde 3-phosphate and glycerone phosphate from D-glucose: step 4/4. This Staphylococcus epidermidis (strain ATCC 12228 / FDA PCI 1200) protein is Fructose-bisphosphate aldolase class 1 (fda).